Reading from the N-terminus, the 339-residue chain is D-erythrose-4-phosphate dehydrogenase (339 aa).

Residue 11-12 participates in NAD(+) binding; sequence RI. Residues 153–155, arginine 199, 212–213, and arginine 235 contribute to the substrate site; these read SCT and TK. The active-site Nucleophile is the cysteine 154. Asparagine 317 is a binding site for NAD(+).

It belongs to the glyceraldehyde-3-phosphate dehydrogenase family. Epd subfamily. As to quaternary structure, homotetramer.

The protein localises to the cytoplasm. The enzyme catalyses D-erythrose 4-phosphate + NAD(+) + H2O = 4-phospho-D-erythronate + NADH + 2 H(+). It functions in the pathway cofactor biosynthesis; pyridoxine 5'-phosphate biosynthesis; pyridoxine 5'-phosphate from D-erythrose 4-phosphate: step 1/5. Functionally, catalyzes the NAD-dependent conversion of D-erythrose 4-phosphate to 4-phosphoerythronate. The chain is D-erythrose-4-phosphate dehydrogenase from Shewanella pealeana (strain ATCC 700345 / ANG-SQ1).